The sequence spans 675 residues: DNA ligase (675 aa).

Residues 32-36, 81-82, and glutamate 113 contribute to the NAD(+) site; these read DAEYD and SL. The active-site N6-AMP-lysine intermediate is lysine 115. Positions 136, 173, 291, and 315 each coordinate NAD(+). Positions 409, 412, 427, and 433 each coordinate Zn(2+). The BRCT domain occupies 595 to 675; that stretch reads SEKTYFFNKK…ELNSLIRIKE (81 aa).

Belongs to the NAD-dependent DNA ligase family. LigA subfamily. Mg(2+) serves as cofactor. Mn(2+) is required as a cofactor.

It catalyses the reaction NAD(+) + (deoxyribonucleotide)n-3'-hydroxyl + 5'-phospho-(deoxyribonucleotide)m = (deoxyribonucleotide)n+m + AMP + beta-nicotinamide D-nucleotide.. Functionally, DNA ligase that catalyzes the formation of phosphodiester linkages between 5'-phosphoryl and 3'-hydroxyl groups in double-stranded DNA using NAD as a coenzyme and as the energy source for the reaction. It is essential for DNA replication and repair of damaged DNA. The sequence is that of DNA ligase from Buchnera aphidicola subsp. Acyrthosiphon pisum (strain APS) (Acyrthosiphon pisum symbiotic bacterium).